Here is a 333-residue protein sequence, read N- to C-terminus: Adenosine deaminase (333 aa).

Residues His12 and His14 each coordinate Zn(2+). The substrate site is built by His14, Asp16, and Gly170. A Zn(2+)-binding site is contributed by His197. The active-site Proton donor is Glu200. Residue Asp278 participates in Zn(2+) binding. Asp279 serves as a coordination point for substrate.

The protein belongs to the metallo-dependent hydrolases superfamily. Adenosine and AMP deaminases family. Adenosine deaminase subfamily. Requires Zn(2+) as cofactor.

The catalysed reaction is adenosine + H2O + H(+) = inosine + NH4(+). It carries out the reaction 2'-deoxyadenosine + H2O + H(+) = 2'-deoxyinosine + NH4(+). Functionally, catalyzes the hydrolytic deamination of adenosine and 2-deoxyadenosine. The sequence is that of Adenosine deaminase from Shigella flexneri serotype 5b (strain 8401).